The primary structure comprises 260 residues: 14-3-3 protein 4 (260 aa).

A disordered region spans residues 238-260 (DNADDVGDDIKEASKPESGEGQQ). Residues 245–260 (DDIKEASKPESGEGQQ) show a composition bias toward basic and acidic residues.

Belongs to the 14-3-3 family. Homodimer.

This is 14-3-3 protein 4 (TFT4) from Solanum lycopersicum (Tomato).